Reading from the N-terminus, the 217-residue chain is Transcription antitermination protein NusB (217 aa).

Belongs to the NusB family.

Its function is as follows. Involved in transcription antitermination. Required for transcription of ribosomal RNA (rRNA) genes. Binds specifically to the boxA antiterminator sequence of the ribosomal RNA (rrn) operons. In Microcystis aeruginosa (strain NIES-843 / IAM M-2473), this protein is Transcription antitermination protein NusB.